The following is a 957-amino-acid chain: Ribonuclease 3-like protein 3 (957 aa).

Residues 4-142 (VEAVEKILNY…IAATVFIDVN (139 aa)) enclose the RNase III 1 domain. The region spanning 307-382 (NGRGELIEIC…AYHMIRALES (76 aa)) is the DRBM 1 domain. The region spanning 415–551 (VEAVEKILNY…VAGAVYIDVK (137 aa)) is the RNase III 2 domain. 2 consecutive DRBM domains span residues 566–645 (EPIY…KLSE) and 837–912 (DEKG…ALES).

Ribonuclease that cleaves double-stranded RNA (dsRNA). This Arabidopsis thaliana (Mouse-ear cress) protein is Ribonuclease 3-like protein 3 (RTL3).